We begin with the raw amino-acid sequence, 190 residues long: Xanthine phosphoribosyltransferase (190 aa).

Xanthine is bound by residues leucine 20 and asparagine 27. A 5-phospho-alpha-D-ribose 1-diphosphate-binding site is contributed by 128–132; sequence ANGQA. Residue lysine 156 coordinates xanthine.

It belongs to the purine/pyrimidine phosphoribosyltransferase family. Xpt subfamily. In terms of assembly, homodimer.

It is found in the cytoplasm. It carries out the reaction XMP + diphosphate = xanthine + 5-phospho-alpha-D-ribose 1-diphosphate. Its pathway is purine metabolism; XMP biosynthesis via salvage pathway; XMP from xanthine: step 1/1. Its function is as follows. Converts the preformed base xanthine, a product of nucleic acid breakdown, to xanthosine 5'-monophosphate (XMP), so it can be reused for RNA or DNA synthesis. The chain is Xanthine phosphoribosyltransferase from Pediococcus pentosaceus (strain ATCC 25745 / CCUG 21536 / LMG 10740 / 183-1w).